We begin with the raw amino-acid sequence, 367 residues long: Cobalt-precorrin-5B C(1)-methyltransferase (367 aa).

Belongs to the CbiD family.

The catalysed reaction is Co-precorrin-5B + S-adenosyl-L-methionine = Co-precorrin-6A + S-adenosyl-L-homocysteine. It participates in cofactor biosynthesis; adenosylcobalamin biosynthesis; cob(II)yrinate a,c-diamide from sirohydrochlorin (anaerobic route): step 6/10. In terms of biological role, catalyzes the methylation of C-1 in cobalt-precorrin-5B to form cobalt-precorrin-6A. The polypeptide is Cobalt-precorrin-5B C(1)-methyltransferase (Leptospira interrogans serogroup Icterohaemorrhagiae serovar Lai (strain 56601)).